A 448-amino-acid polypeptide reads, in one-letter code: Methylenetetrahydrofolate--tRNA-(uracil-5-)-methyltransferase TrmFO (448 aa).

Residue 13–18 coordinates FAD; the sequence is GAGLAG.

It belongs to the MnmG family. TrmFO subfamily. It depends on FAD as a cofactor.

It localises to the cytoplasm. It carries out the reaction uridine(54) in tRNA + (6R)-5,10-methylene-5,6,7,8-tetrahydrofolate + NADH + H(+) = 5-methyluridine(54) in tRNA + (6S)-5,6,7,8-tetrahydrofolate + NAD(+). It catalyses the reaction uridine(54) in tRNA + (6R)-5,10-methylene-5,6,7,8-tetrahydrofolate + NADPH + H(+) = 5-methyluridine(54) in tRNA + (6S)-5,6,7,8-tetrahydrofolate + NADP(+). Catalyzes the folate-dependent formation of 5-methyl-uridine at position 54 (M-5-U54) in all tRNAs. The sequence is that of Methylenetetrahydrofolate--tRNA-(uracil-5-)-methyltransferase TrmFO from Streptococcus pyogenes serotype M2 (strain MGAS10270).